A 318-amino-acid polypeptide reads, in one-letter code: Formimidoylglutamase (318 aa).

Positions 124, 153, 155, 157, 241, and 243 each coordinate Mn(2+).

Belongs to the arginase family. Mn(2+) is required as a cofactor.

It carries out the reaction N-formimidoyl-L-glutamate + H2O = formamide + L-glutamate. It functions in the pathway amino-acid degradation; L-histidine degradation into L-glutamate; L-glutamate from N-formimidoyl-L-glutamate (hydrolase route): step 1/1. In terms of biological role, catalyzes the conversion of N-formimidoyl-L-glutamate to L-glutamate and formamide. In Fusobacterium nucleatum subsp. nucleatum (strain ATCC 25586 / DSM 15643 / BCRC 10681 / CIP 101130 / JCM 8532 / KCTC 2640 / LMG 13131 / VPI 4355), this protein is Formimidoylglutamase.